Reading from the N-terminus, the 381-residue chain is Lysophosphatidylserine lipase ABHD12 (381 aa).

Residues 1-58 lie on the Cytoplasmic side of the membrane; the sequence is MRKRNESVTVEHERAAAAPAPLDKGCSLRHSLRLPAADTGMKRPLGRRHGLWFRLRRL. A helical membrane pass occupies residues 59–79; it reads IIWLLGVYIAIPFLVKLCPAI. Residues 80-381 lie on the Extracellular side of the membrane; sequence QAKLVFLNFV…LGIPEHEHHH (302 aa). Residue N106 is glycosylated (N-linked (GlcNAc...) asparagine). The active-site Nucleophile is S229. Catalysis depends on charge relay system residues D316 and H355.

Belongs to the serine esterase family.

The protein localises to the endoplasmic reticulum membrane. It carries out the reaction 1-(9Z-octadecenoyl)-sn-glycero-3-phospho-L-serine + H2O = sn-glycero-3-phospho-L-serine + (9Z)-octadecenoate + H(+). The catalysed reaction is 1-(9Z-octadecenoyl)-sn-glycero-3-phospho-(1'-sn-glycerol) + H2O = sn-glycero-3-phospho-(1'-sn-glycerol) + (9Z)-octadecenoate + H(+). The enzyme catalyses 1-(9Z-octadecenoyl)-sn-glycero-3-phospho-(1D-myo-inositol) + H2O = sn-glycero-3-phospho-1D-myo-inositol + (9Z)-octadecenoate + H(+). It catalyses the reaction 1-(9Z-octadecenoyl)-sn-glycero-3-phosphoethanolamine + H2O = sn-glycero-3-phosphoethanolamine + (9Z)-octadecenoate + H(+). It carries out the reaction 1-(9Z-octadecenoyl)-sn-glycero-3-phosphocholine + H2O = 1-(9Z-octadecenoyl)-sn-glycerol + phosphocholine + H(+). The catalysed reaction is 2-(9Z-octadecenoyl)-glycerol + H2O = glycerol + (9Z)-octadecenoate + H(+). The enzyme catalyses 1-hexadecanoyl-sn-glycero-3-phospho-L-serine + H2O = sn-glycero-3-phospho-L-serine + hexadecanoate + H(+). It catalyses the reaction 2-(5Z,8Z,11Z,14Z-eicosatetraenoyl)-glycerol + H2O = glycerol + (5Z,8Z,11Z,14Z)-eicosatetraenoate + H(+). It carries out the reaction Hydrolyzes glycerol monoesters of long-chain fatty acids.. The catalysed reaction is 1-decanoylglycerol + H2O = decanoate + glycerol + H(+). The enzyme catalyses 1-dodecanoylglycerol + H2O = dodecanoate + glycerol + H(+). It catalyses the reaction 1-tetradecanoylglycerol + H2O = tetradecanoate + glycerol + H(+). It carries out the reaction 2-hexadecanoylglycerol + H2O = glycerol + hexadecanoate + H(+). The catalysed reaction is 1-(9Z-octadecenoyl)-glycerol + H2O = glycerol + (9Z)-octadecenoate + H(+). The enzyme catalyses 2-(9Z,12Z-octadecadienoyl)-glycerol + H2O = (9Z,12Z)-octadecadienoate + glycerol + H(+). It catalyses the reaction 1-(5Z,8Z,11Z,14Z-eicosatetraenoyl)-glycerol + H2O = glycerol + (5Z,8Z,11Z,14Z)-eicosatetraenoate + H(+). It carries out the reaction 1-(9Z,12Z-octadecadienoyl)-glycerol + H2O = (9Z,12Z)-octadecadienoate + glycerol + H(+). The catalysed reaction is 1-hexadecanoylglycerol + H2O = glycerol + hexadecanoate + H(+). The enzyme catalyses 1-octadecanoylglycerol + H2O = octadecanoate + glycerol + H(+). It catalyses the reaction 1-octadecanoyl-2-(9,10-epoxyoctadecanoyl)-sn-glycero-3-phospho-L-serine + H2O = 9,10-epoxyoctadecanoate + 1-octadecanoyl-sn-glycero-3-phosphoserine + H(+). It carries out the reaction 1-octadecanoyl-2-(10-hydroxyoctadecanoyl)-sn-glycero-3-phospho-L-serine + H2O = 1-octadecanoyl-sn-glycero-3-phosphoserine + 10-hydroxyoctadecanoate + H(+). The catalysed reaction is 1-hexadecanoyl-2-(10-hydroxyoctadecanoyl)-sn-glycero-3-phospho-L-serine + H2O = 10-hydroxyoctadecanoate + 1-hexadecanoyl-sn-glycero-3-phospho-L-serine + H(+). Its function is as follows. Lysophosphatidylserine (LPS) lipase that mediates the hydrolysis of lysophosphatidylserine, a class of signaling lipids that regulates immunological and neurological processes. Represents a major lysophosphatidylserine lipase in the brain, thereby playing a key role in the central nervous system. Also able to hydrolyze oxidized phosphatidylserine; oxidized phosphatidylserine is produced in response to severe inflammatory stress and constitutes a proapoptotic 'eat me' signal. Also has monoacylglycerol (MAG) lipase activity: hydrolyzes 2-arachidonoylglycerol (2-AG), thereby acting as a regulator of endocannabinoid signaling pathways. Has a strong preference for very-long-chain lipid substrates; substrate specificity is likely due to improved catalysis and not improved substrate binding. This Gallus gallus (Chicken) protein is Lysophosphatidylserine lipase ABHD12.